A 692-amino-acid polypeptide reads, in one-letter code: Elongation factor G (692 aa).

A tr-type G domain is found at 8–282 (ENTRNIGIMA…AVIDYLPSPL (275 aa)). GTP-binding positions include 17 to 24 (AHIDAGKT), 81 to 85 (DTPGH), and 135 to 138 (NKMD).

Belongs to the TRAFAC class translation factor GTPase superfamily. Classic translation factor GTPase family. EF-G/EF-2 subfamily.

It localises to the cytoplasm. In terms of biological role, catalyzes the GTP-dependent ribosomal translocation step during translation elongation. During this step, the ribosome changes from the pre-translocational (PRE) to the post-translocational (POST) state as the newly formed A-site-bound peptidyl-tRNA and P-site-bound deacylated tRNA move to the P and E sites, respectively. Catalyzes the coordinated movement of the two tRNA molecules, the mRNA and conformational changes in the ribosome. The protein is Elongation factor G of Bacillus cereus (strain ZK / E33L).